A 247-amino-acid polypeptide reads, in one-letter code: MFNAIVSADTLQATLDSVSVLVDECKIHLEEDGLEIRAVDPANVGMVDLRLDAAAFESYETDGGLIGVNLSRLEDIAGMADAGQLVHLDLDEETRKLHISIDGLEYTLALIDPDSIRQEPDLPDLDLSANIVIEGKDIDRSVTAADMVSDHIALGVDATDELFYVDAEGDTDDVHLELTRDDLIDLTPGDAHSLFSLDYLKNMNKAIPKDAEVEMELGEEFPVKMHFSFAEGQGRVTYMLAPRIQSE.

Belongs to the PCNA family. Homotrimer. The subunits circularize to form a toroid; DNA passes through its center. Replication factor C (RFC) is required to load the toroid on the DNA.

Sliding clamp subunit that acts as a moving platform for DNA processing. Responsible for tethering the catalytic subunit of DNA polymerase and other proteins to DNA during high-speed replication. The sequence is that of DNA polymerase sliding clamp from Haloarcula marismortui (strain ATCC 43049 / DSM 3752 / JCM 8966 / VKM B-1809) (Halobacterium marismortui).